Here is a 565-residue protein sequence, read N- to C-terminus: Proline--tRNA ligase (565 aa).

This sequence belongs to the class-II aminoacyl-tRNA synthetase family. ProS type 1 subfamily. As to quaternary structure, homodimer.

It localises to the cytoplasm. The catalysed reaction is tRNA(Pro) + L-proline + ATP = L-prolyl-tRNA(Pro) + AMP + diphosphate. In terms of biological role, catalyzes the attachment of proline to tRNA(Pro) in a two-step reaction: proline is first activated by ATP to form Pro-AMP and then transferred to the acceptor end of tRNA(Pro). As ProRS can inadvertently accommodate and process non-cognate amino acids such as alanine and cysteine, to avoid such errors it has two additional distinct editing activities against alanine. One activity is designated as 'pretransfer' editing and involves the tRNA(Pro)-independent hydrolysis of activated Ala-AMP. The other activity is designated 'posttransfer' editing and involves deacylation of mischarged Ala-tRNA(Pro). The misacylated Cys-tRNA(Pro) is not edited by ProRS. This is Proline--tRNA ligase from Campylobacter lari (strain RM2100 / D67 / ATCC BAA-1060).